Here is a 479-residue protein sequence, read N- to C-terminus: Shugoshin (479 aa).

A coiled-coil region spans residues 36 to 76 (SLRIRSLESEVSNLLSENVSLREQIITLTQELERFEAARTL). 3 disordered regions span residues 109 to 145 (SRAV…GFLD), 220 to 247 (EHSL…QADT), and 263 to 479 (AKRK…SMPP). Over residues 123–132 (QSRESGPKEV) the composition is skewed to basic and acidic residues. The span at 270–286 (EDDESLFESSPSEDDEF) shows a compositional bias: acidic residues. Polar residues-rich tracts occupy residues 290 to 303 (RPAQ…QNEH) and 318 to 328 (QSPTLSSQNDH). Basic and acidic residues-rich tracts occupy residues 335 to 352 (PQSE…RVLE) and 379 to 388 (GYNEKSEKPL). Positions 400–411 (KNASPKKSSTRT) are enriched in polar residues.

Belongs to the shugoshin family.

It localises to the nucleus. The protein localises to the chromosome. Its subcellular location is the centromere. Functionally, plays a central role in chromosome cohesion during cell division by preventing premature dissociation of cohesin complex from centromeres after prophase, when most of cohesin complex dissociates from chromosomes arms. This chain is Shugoshin (sgo1), found in Emericella nidulans (strain FGSC A4 / ATCC 38163 / CBS 112.46 / NRRL 194 / M139) (Aspergillus nidulans).